The primary structure comprises 655 residues: DLSLSMKDDLDTIRNLGTKLAEEMRKLTSNFRLGFGSFVDKDISPFSYTAPRYQTNPCIGYKLFPNCVPSFGFRHLLPLTDRVDSFNEEVRKQRVSRNRDAPEGCFDAVLQAAVCKEKIGWRKDALHLLVFTTDDVPHIALDGKLGGLVQPHDGQCHLNEANEYTASNQMDYPSLALLGEKLAENNINLIFAVTKNHYMLYKNFTALIPGTTVEILDGDSKNIIQLIINAYNSIRSKVELSVWDQPEDLNLFFTATCQDGVSYPGQRKCEGLKIGDTASFEVSVEARSCPSRHTEHVFALQPVGCRDSLEVGVTYNCTCGCSVGLEPNSARCSGTGTYVCGLCECSPGYLGTRCECQDGENHSVYQNLCRDTEGKPLCSGRGDCSCNQCSCFESEFGKIYGPFCECDNFSCARNKGVLCSGHGECHCGECKCHAGYIGDNCNCSTDISTCRGRDGQICSERGHCLCGQCQCTEPGAFGEMCEKCPTCPDACSTKRDCVECPLLHSGKPDNQTCHSLCRDEVITWVDTIVKDDQEAVLCFYKTAKDCVMMFTYVELPSGKSNLTVLREPECGNTPNAMTILLAVVGSILLVGLALLAIWKLLVTIHDRREFAKFQSERSRARYEMASNPLYRKPISTHTVDFTFNKFNKSYNGTVD.

The 234-residue stretch at 1–234 folds into the VWFA domain; that stretch reads DLSLSMKDDL…QLIINAYNSI (234 aa). The Extracellular segment spans residues 1–575; sequence DLSLSMKDDL…REPECGNTPN (575 aa). Mg(2+) contacts are provided by Ser3 and Ser5. Ser5, Asp8, Asp9, and Asp40 together coordinate Ca(2+). A disulfide bridge connects residues Cys58 and Cys67. Ca(2+)-binding residues include Asn98, Asp100, Pro102, and Glu103. Glu103 provides a ligand contact to Mg(2+). An intrachain disulfide couples Cys115 to Cys156. N-linked (GlcNAc...) asparagine glycosylation occurs at Asn203. A Ca(2+)-binding site is contributed by Gly218. Intrachain disulfides connect Cys257-Cys269, Cys289-Cys317, Cys321-Cys340, Cys332-Cys343, Cys345-Cys354, Cys356-Cys386, Cys369-Cys384, Cys378-Cys389, Cys391-Cys404, Cys406-Cys427, Cys411-Cys425, Cys419-Cys430, and Cys432-Cys441. Residue Asn316 is glycosylated (N-linked (GlcNAc...) asparagine). 4 consecutive I-EGF domains span residues 321 to 355, 356 to 405, 406 to 442, and 443 to 482; these read CSVG…TRCE, CQDG…PFCE, CDNF…DNCN, and CSTD…EMCE. N-linked (GlcNAc...) asparagine glycosylation is present at Asn408. Asn442 is a glycosylation site (N-linked (GlcNAc...) asparagine). Intrachain disulfides connect Cys443–Cys466, Cys450–Cys464, Cys458–Cys469, Cys471–Cys481, Cys484–Cys487, Cys491–Cys538, Cys497–Cys517, Cys500–Cys513, and Cys546–Cys570. Asn510 and Asn561 each carry an N-linked (GlcNAc...) asparagine glycan. The chain crosses the membrane as a helical span at residues 576–598; that stretch reads AMTILLAVVGSILLVGLALLAIW. Residues 599–655 lie on the Cytoplasmic side of the membrane; sequence KLLVTIHDRREFAKFQSERSRARYEMASNPLYRKPISTHTVDFTFNKFNKSYNGTVD. At Ser626 the chain carries Phosphoserine.

It belongs to the integrin beta chain family. In terms of assembly, heterodimer of an alpha and a beta subunit. Beta-5 (ITGB5) associates with alpha-V (ITGAV). Interacts with MYO10. Interacts with DAB2. Integrin ITGAV:ITGB5 interacts with FBLN5 (via N-terminus). ITGAV:ITGB5 interacts with CCN3. Interacts with tensin TNS3; TNS3 also interacts with PEAK1, thus acting as an adapter molecule to bridge the association of PEAK1 with ITGB5.

Its subcellular location is the cell membrane. In terms of biological role, integrin alpha-V/beta-5 (ITGAV:ITGB5) is a receptor for fibronectin. It recognizes the sequence R-G-D in its ligand. The polypeptide is Integrin beta-5 (ITGB5) (Papio cynocephalus (Yellow baboon)).